A 249-amino-acid polypeptide reads, in one-letter code: Spindlin-4 (249 aa).

Tudor-like domain stretches follow at residues 41–90 (VGCR…LELH), 119–168 (VGKA…YTLL), and 201–246 (VGKQ…YGLV). 3 histone H3K4me3 and H3R8me2a binding regions span residues 80 to 85 (GKDSVY), Glu128, and 237 to 239 (DIH).

It belongs to the SPIN/STSY family. In terms of assembly, interacts with C11orf84/SPINDOC. Associates with chromatin.

Its subcellular location is the cytoplasm. The protein localises to the nucleus. In terms of biological role, binds to acetylated and methylated histones, including H3K4me3 and H4K20me3, probably acting as a histone reader that recognizes chromatin marks to mediate downstream cellular effects. Promotes canonical WNT signaling, and is involved in the down-regulation of cell proliferation. This Mus musculus (Mouse) protein is Spindlin-4 (Spin4).